Reading from the N-terminus, the 272-residue chain is Putative hydro-lyase AZC_4080 (272 aa).

This sequence belongs to the D-glutamate cyclase family.

This chain is Putative hydro-lyase AZC_4080, found in Azorhizobium caulinodans (strain ATCC 43989 / DSM 5975 / JCM 20966 / LMG 6465 / NBRC 14845 / NCIMB 13405 / ORS 571).